Consider the following 471-residue polypeptide: MKLPNKLGPIHFIGIGGIGMSGIAEVMHNLGYTVQGSDAADNYNVRRLAEKGIRTFVGHRGENLADAELVVVSTAIRRDNPELALARERRLPVVRRAEMLAELMRFKSCVAVAGTHGKTTTTSLVATLLDAGGLDPTVINGGIINAYGTNARMGEGDWMVVEADESDGTFLKLPADIAIVTNIDPEHLDHFGSFDAIKDAFRAFIDNIPFYGFAVMCIDHPTVQDLVGRIEDRRIVTYGENPQADVRLIDVDLKGGQSRFRVMIRDRRPGFRLEMEDLVLPMPGKHNALNATAALAVAHELGVSPEAIRRALAGFGGVKRRFTRTGEWNGAQIFDDYGHHPVEIKAVLKAARASTEGRVVAVVQPHRYTRLASLFDDFCTCFNDADTVIVAPVYAAGEAPIEGFDRDALVAGLKSRGHRNAVALERSEDLAAMISGLAGPGDYVVCLGAGNITQWAYALPGELAALGEKAA.

ATP is bound at residue 114 to 120 (GTHGKTT).

It belongs to the MurCDEF family.

It is found in the cytoplasm. The enzyme catalyses UDP-N-acetyl-alpha-D-muramate + L-alanine + ATP = UDP-N-acetyl-alpha-D-muramoyl-L-alanine + ADP + phosphate + H(+). It participates in cell wall biogenesis; peptidoglycan biosynthesis. Cell wall formation. The sequence is that of UDP-N-acetylmuramate--L-alanine ligase from Methylobacterium nodulans (strain LMG 21967 / CNCM I-2342 / ORS 2060).